Consider the following 317-residue polypeptide: Protein IMPACT-B (317 aa).

The 102-residue stretch at 17-118 (EEIEALSSIY…EKIREFLTEK (102 aa)) folds into the RWD domain. Positions 296-317 (DSTEETSKAGGKSKKPKSKKTK) are disordered. Positions 306-317 (GKSKKPKSKKTK) are enriched in basic residues.

The protein belongs to the IMPACT family. As to quaternary structure, interacts with GCN1; prevents the interaction of GCN1 with EIF2AK4/GCN2 and inhibits EIF2AK4/GCN2 kinase activity. Interaction with RPL39; this interaction occurs in a GCN1-independent manner. Associates with ribosomes; this interaction occurs in a GCN1-independent manner. Associates with actin; this interaction occurs in a GCN1-independent manner.

Its subcellular location is the cytoplasm. In terms of biological role, translational regulator that ensures constant high levels of translation upon a variety of stress conditions, such as amino acid starvation, UV-C irradiation, proteasome inhibitor treatment and glucose deprivation. Plays a role as a negative regulator of the EIF2AK4/GCN2 kinase activity; impairs GCN1-mediated EIF2AK4/GCN2 activation, and hence EIF2AK4/GCN2-mediated eIF-2-alpha phosphorylation and subsequent down-regulation of protein synthesis. Plays a role in differentiation of neuronal cells by stimulating neurite outgrowth. The polypeptide is Protein IMPACT-B (impact-B) (Xenopus tropicalis (Western clawed frog)).